Here is a 173-residue protein sequence, read N- to C-terminus: NADH-ubiquinone oxidoreductase chain 6 (173 aa).

The next 5 helical transmembrane spans lie at 1-21, 27-47, 48-68, 87-107, and 139-159; these read MTYF…AVAS, YGVV…VNLG, VSFV…VVFV, VMGY…LGGF, and YGVG…FVVL.

Belongs to the complex I subunit 6 family.

It is found in the mitochondrion membrane. It carries out the reaction a ubiquinone + NADH + 5 H(+)(in) = a ubiquinol + NAD(+) + 4 H(+)(out). Core subunit of the mitochondrial membrane respiratory chain NADH dehydrogenase (Complex I) that is believed to belong to the minimal assembly required for catalysis. Complex I functions in the transfer of electrons from NADH to the respiratory chain. The immediate electron acceptor for the enzyme is believed to be ubiquinone. In Coturnix japonica (Japanese quail), this protein is NADH-ubiquinone oxidoreductase chain 6 (MT-ND6).